Here is a 104-residue protein sequence, read N- to C-terminus: Flagellar hook-basal body complex protein FliE (104 aa).

Belongs to the FliE family.

Its subcellular location is the bacterial flagellum basal body. This Salmonella typhi protein is Flagellar hook-basal body complex protein FliE.